The sequence spans 383 residues: S-adenosylmethionine synthase (383 aa).

His-15 provides a ligand contact to ATP. Asp-17 is a binding site for Mg(2+). Residue Glu-43 participates in K(+) binding. 2 residues coordinate L-methionine: Glu-56 and Gln-99. The interval 99–109 (QSPDINQGVDK) is flexible loop. ATP contacts are provided by residues 164–166 (DAK), 230–231 (RF), Asp-239, 245–246 (RK), Ala-262, and Lys-266. Asp-239 is an L-methionine binding site. Position 270 (Lys-270) interacts with L-methionine.

It belongs to the AdoMet synthase family. As to quaternary structure, homotetramer; dimer of dimers. Mg(2+) serves as cofactor. Requires K(+) as cofactor.

The protein resides in the cytoplasm. It carries out the reaction L-methionine + ATP + H2O = S-adenosyl-L-methionine + phosphate + diphosphate. Its pathway is amino-acid biosynthesis; S-adenosyl-L-methionine biosynthesis; S-adenosyl-L-methionine from L-methionine: step 1/1. In terms of biological role, catalyzes the formation of S-adenosylmethionine (AdoMet) from methionine and ATP. The overall synthetic reaction is composed of two sequential steps, AdoMet formation and the subsequent tripolyphosphate hydrolysis which occurs prior to release of AdoMet from the enzyme. This is S-adenosylmethionine synthase from Vibrio atlanticus (strain LGP32) (Vibrio splendidus (strain Mel32)).